Consider the following 375-residue polypeptide: Carboxypeptidase O (375 aa).

A signal peptide spans 1-20 (MKPLLGTFYLLGMLVPGWLG). One can recognise a Peptidase M14 domain in the interval 50 to 345 (RYHPMGEIYQ…EAVLSVLDDV (296 aa)). Zn(2+) is bound by residues His-109 and Glu-112. N-linked (GlcNAc...) asparagine glycosylation occurs at Asn-175. His-237 contacts Zn(2+). Asn-252 carries N-linked (GlcNAc...) asparagine glycosylation. Glu-311 functions as the Proton donor/acceptor in the catalytic mechanism. N-linked (GlcNAc...) asparagine glycosylation is present at Asn-315. The GPI-anchor amidated serine moiety is linked to residue Ser-354. Positions 355 to 375 (ARKAKSTALVLGLLMSFMSLL) are cleaved as a propeptide — removed in mature form.

The protein belongs to the peptidase M14 family. Zn(2+) is required as a cofactor.

The protein resides in the apical cell membrane. Its function is as follows. Carboxypeptidase which preferentially cleaves C-terminal acidic residues from peptides and proteins. Can also cleave C-terminal hydrophobic amino acids, with a preference for small residues over large residues. This Bos taurus (Bovine) protein is Carboxypeptidase O.